The following is a 240-amino-acid chain: Ribosomal RNA small subunit methyltransferase G (240 aa).

Residues Gly-79, 130–131, and Arg-149 each bind S-adenosyl-L-methionine; that span reads AE.

Belongs to the methyltransferase superfamily. RNA methyltransferase RsmG family.

It is found in the cytoplasm. In terms of biological role, specifically methylates the N7 position of a guanine in 16S rRNA. This Moorella thermoacetica (strain ATCC 39073 / JCM 9320) protein is Ribosomal RNA small subunit methyltransferase G.